We begin with the raw amino-acid sequence, 250 residues long: Diphthine synthase (250 aa).

Residues Leu9, Asp85, Val88, 113–114 (SI), Leu165, Ala202, and His227 contribute to the S-adenosyl-L-methionine site.

This sequence belongs to the diphthine synthase family. As to quaternary structure, homodimer.

It carries out the reaction 2-[(3S)-amino-3-carboxypropyl]-L-histidyl-[translation elongation factor 2] + 3 S-adenosyl-L-methionine = diphthine-[translation elongation factor 2] + 3 S-adenosyl-L-homocysteine + 3 H(+). Its pathway is protein modification; peptidyl-diphthamide biosynthesis. In terms of biological role, S-adenosyl-L-methionine-dependent methyltransferase that catalyzes the trimethylation of the amino group of the modified target histidine residue in translation elongation factor 2 (EF-2), to form an intermediate called diphthine. The three successive methylation reactions represent the second step of diphthamide biosynthesis. This chain is Diphthine synthase, found in Methanoregula boonei (strain DSM 21154 / JCM 14090 / 6A8).